We begin with the raw amino-acid sequence, 597 residues long: uncharacterized protein (597 aa).

5 consecutive transmembrane segments (helical) span residues 37-57, 67-87, 109-129, 134-154, and 162-182; these read VLII…LWPV, IFWL…LQFA, GGER…YAAI, SVSL…FIAW, and ALMT…LAIV. Positions 393 to 597 constitute a Histidine kinase domain; the sequence is HQLARDLHDG…QITIFVPIES (205 aa).

It is found in the cell membrane. This is an uncharacterized protein from Chloroflexus aurantiacus (strain ATCC 29366 / DSM 635 / J-10-fl).